A 151-amino-acid chain; its full sequence is Transcriptional regulator MraZ (151 aa).

2 SpoVT-AbrB domains span residues 5 to 52 and 81 to 124; these read ANAI…PLDE and AVDL…DEDA.

This sequence belongs to the MraZ family. In terms of assembly, forms oligomers.

The protein resides in the cytoplasm. It localises to the nucleoid. In Pseudomonas fluorescens (strain ATCC BAA-477 / NRRL B-23932 / Pf-5), this protein is Transcriptional regulator MraZ.